We begin with the raw amino-acid sequence, 165 residues long: Large ribosomal subunit protein uL10 (165 aa).

This sequence belongs to the universal ribosomal protein uL10 family. In terms of assembly, part of the ribosomal stalk of the 50S ribosomal subunit. The N-terminus interacts with L11 and the large rRNA to form the base of the stalk. The C-terminus forms an elongated spine to which L12 dimers bind in a sequential fashion forming a multimeric L10(L12)X complex.

In terms of biological role, forms part of the ribosomal stalk, playing a central role in the interaction of the ribosome with GTP-bound translation factors. The protein is Large ribosomal subunit protein uL10 of Salmonella agona (strain SL483).